A 178-amino-acid chain; its full sequence is Translation initiation factor IF-3 (178 aa).

This sequence belongs to the IF-3 family. In terms of assembly, monomer.

Its subcellular location is the cytoplasm. Its function is as follows. IF-3 binds to the 30S ribosomal subunit and shifts the equilibrium between 70S ribosomes and their 50S and 30S subunits in favor of the free subunits, thus enhancing the availability of 30S subunits on which protein synthesis initiation begins. This is Translation initiation factor IF-3 from Legionella pneumophila (strain Paris).